Here is a 186-residue protein sequence, read N- to C-terminus: Inner membrane-spanning protein YciB (186 aa).

Transmembrane regions (helical) follow at residues 10 to 30 (IILF…AVAI), 47 to 67 (VEPL…ATLL), 76 to 96 (WKPT…QLMF), 121 to 141 (WGWT…AYHF), and 149 to 169 (FKLF…ALYL).

This sequence belongs to the YciB family.

It localises to the cell inner membrane. In terms of biological role, plays a role in cell envelope biogenesis, maintenance of cell envelope integrity and membrane homeostasis. The polypeptide is Inner membrane-spanning protein YciB (Acidovorax ebreus (strain TPSY) (Diaphorobacter sp. (strain TPSY))).